Reading from the N-terminus, the 261-residue chain is Undecaprenyl-diphosphatase (261 aa).

8 helical membrane passes run 9 to 31 (ALLLGVVEGLTEFLPVSSTGHLT), 46 to 66 (FLKTFLVAIQLGAILAVLLLY), 80 to 100 (IAVAFVPTGVIGFLFYPLIKG), 102 to 122 (ILGNDAVVAFFLFFVGAVLLF), 137 to 157 (ALPLARVAWIGVFQGLAALFP), 180 to 200 (AEFSFLLALPTMFAAVGYDLW), 209 to 229 (GGWSLLLLGFLAALVTALVTV), and 240 to 260 (GFRPFALYRMALAAVYAFFFL).

The protein belongs to the UppP family.

It localises to the cell inner membrane. The enzyme catalyses di-trans,octa-cis-undecaprenyl diphosphate + H2O = di-trans,octa-cis-undecaprenyl phosphate + phosphate + H(+). Catalyzes the dephosphorylation of undecaprenyl diphosphate (UPP). Confers resistance to bacitracin. The polypeptide is Undecaprenyl-diphosphatase (Thermus thermophilus (strain ATCC 27634 / DSM 579 / HB8)).